The sequence spans 424 residues: Calreticulin (424 aa).

The signal sequence occupies residues 1-19 (MRLLLCLIFLVFVFNFALS). A disulfide bridge connects residues cysteine 105 and cysteine 137. Tyrosine 109, lysine 111, tyrosine 128, and aspartate 135 together coordinate an alpha-D-glucoside. 7 consecutive repeat copies span residues 191–202 (IQAGNLADDWEL), 210–221 (DPKQSKPVDWVD), 227–238 (DPEDVKPAGHDD), 246–256 (PEAVKPEDWNE), 260–270 (GEWEAPTIANP), 274–284 (GEWKAKKIPNP), and 288–298 (GEWVHPLIDNP). A 4 X 12 AA approximate repeats region spans residues 191–256 (IQAGNLADDW…EAVKPEDWNE (66 aa)). Residues 260-298 (GEWEAPTIANPEYKGEWKAKKIPNPEYKGEWVHPLIDNP) form a 3 X 11 AA approximate repeats region. Glutamate 318 contributes to the an alpha-D-glucoside binding site. A compositionally biased stretch (basic and acidic residues) spans 370–385 (RKKADEKLAAEKAAEK). A disordered region spans residues 370-424 (RKKADEKLAAEKAAEKEAEEADEEEEEVAEEDLVKTDDKKEEVKKSTKKVDHDEL). Over residues 386 to 400 (EAEEADEEEEEVAEE) the composition is skewed to acidic residues. Residues 401-424 (DLVKTDDKKEEVKKSTKKVDHDEL) show a composition bias toward basic and acidic residues. A Prevents secretion from ER motif is present at residues 421 to 424 (HDEL).

Belongs to the calreticulin family.

It localises to the endoplasmic reticulum lumen. Molecular calcium-binding chaperone promoting folding, oligomeric assembly and quality control in the ER via the calreticulin/calnexin cycle. This lectin may interact transiently with almost all of the monoglucosylated glycoproteins that are synthesized in the ER. The sequence is that of Calreticulin (crtA) from Dictyostelium discoideum (Social amoeba).